We begin with the raw amino-acid sequence, 201 residues long: Putative 3-methyladenine DNA glycosylase (201 aa).

The protein belongs to the DNA glycosylase MPG family.

This chain is Putative 3-methyladenine DNA glycosylase, found in Clostridium novyi (strain NT).